A 427-amino-acid chain; its full sequence is Extracellular superoxide dismutase [Cu-Zn] 2 (427 aa).

A signal peptide spans 1 to 20 (MNKLIISLLIVLSAISIISA). At 21–406 (DYQYGYCKFG…PTETSQPGTS (386 aa)) the chain is on the extracellular side. 5 N-linked (GlcNAc...) asparagine glycosylation sites follow: N38, N57, N81, N190, and N218. Cu cation is bound by residues H257, H259, and H275. 2 residues coordinate Zn(2+): H275 and H283. Residue N288 is glycosylated (N-linked (GlcNAc...) asparagine). Residues H292 and D295 each contribute to the Zn(2+) site. H331 lines the Cu cation pocket. Residue N376 is glycosylated (N-linked (GlcNAc...) asparagine). The segment at 381–404 (GESTIEPSPTPSTTPTPTETSQPG) is disordered. The span at 395–404 (PTPTETSQPG) shows a compositional bias: low complexity. A helical transmembrane segment spans residues 407-426 (SYLAPFFVLILSSLISVILI). Residue L427 is a topological domain, cytoplasmic.

Belongs to the Cu-Zn superoxide dismutase family. Cu cation serves as cofactor. It depends on Zn(2+) as a cofactor.

It localises to the cell membrane. The enzyme catalyses 2 superoxide + 2 H(+) = H2O2 + O2. Functionally, protect the extracellular space from toxic effect of reactive oxygen intermediates by converting superoxyde radicals into hydrogen peroxyde and oxygen. The polypeptide is Extracellular superoxide dismutase [Cu-Zn] 2 (sodB) (Dictyostelium discoideum (Social amoeba)).